We begin with the raw amino-acid sequence, 313 residues long: Ribosomal RNA small subunit methyltransferase H (313 aa).

Residues 35–37 (GGH), D55, F79, D100, and Q107 contribute to the S-adenosyl-L-methionine site.

The protein belongs to the methyltransferase superfamily. RsmH family.

Its subcellular location is the cytoplasm. It carries out the reaction cytidine(1402) in 16S rRNA + S-adenosyl-L-methionine = N(4)-methylcytidine(1402) in 16S rRNA + S-adenosyl-L-homocysteine + H(+). Functionally, specifically methylates the N4 position of cytidine in position 1402 (C1402) of 16S rRNA. The protein is Ribosomal RNA small subunit methyltransferase H of Burkholderia pseudomallei (strain K96243).